We begin with the raw amino-acid sequence, 325 residues long: ATP synthase gamma chain (325 aa).

It belongs to the ATPase gamma chain family. As to quaternary structure, F-type ATPases have 2 components, CF(1) - the catalytic core - and CF(0) - the membrane proton channel. CF(1) has five subunits: alpha(3), beta(3), gamma(1), delta(1), epsilon(1). CF(0) has three main subunits: a, b and c.

Its subcellular location is the cell membrane. Functionally, produces ATP from ADP in the presence of a proton gradient across the membrane. The gamma chain is believed to be important in regulating ATPase activity and the flow of protons through the CF(0) complex. This chain is ATP synthase gamma chain, found in Corynebacterium glutamicum (strain ATCC 13032 / DSM 20300 / JCM 1318 / BCRC 11384 / CCUG 27702 / LMG 3730 / NBRC 12168 / NCIMB 10025 / NRRL B-2784 / 534).